Here is a 384-residue protein sequence, read N- to C-terminus: MAP kinase-activated protein kinase 3 (384 aa).

N-acetylmethionine is present on Met-1. The disordered stretch occupies residues 1–22 (MDVETAEEQGGPAPPSGVPCGP). In terms of domain architecture, Protein kinase spans 46 to 306 (QLSKQVLGLG…ITQFMNHPWI (261 aa)). Residues 52–60 (LGLGVNGKV) and Lys-75 each bind ATP. The Proton acceptor role is filled by Asp-168. Thr-203 is subject to Phosphothreonine; by MAPK14. Phosphoserine; by MAPK14 is present on Ser-253. Ser-309 is modified (phosphoserine; by autocatalysis). The tract at residues 309 to 345 (SMVVPQTPLHTARVLQEDRDHWDEVKEEMTSALATMR) is autoinhibitory helix. Thr-315 bears the Phosphothreonine; by MAPK14 mark. Residues 337–346 (MTSALATMRV) carry the Nuclear export signal (NES) motif. Positions 347 to 371 (DYDQVKIKDLKTSNNRLLNKRRKKQ) are p38 MAPK-binding site. Short sequence motifs (bipartite nuclear localization signal) lie at residues 352–355 (KIKD) and 366–370 (KRRKK). The tract at residues 359-384 (SNNRLLNKRRKKQAGSSSGSQGCNNQ) is disordered. A compositionally biased stretch (low complexity) spans 373–384 (GSSSGSQGCNNQ).

Belongs to the protein kinase superfamily. CAMK Ser/Thr protein kinase family. Heterodimer with p38-alpha/MAPK14. The heterodimer with p38-alpha/MAPK14 forms a stable complex: molecules are positioned 'face to face' so that the ATP-binding sites of both kinases are at the heterodimer interface. Interacts with TCF3 and with polycomb proteins, such as PCH2 and BMI1/PCGF4. Phosphorylated and activated by MAPK1/ERK2 and MAPK3/ERK1. Phosphorylated and activated by MAP kinase p38-alpha/MAPK14 at Thr-203, Ser-253 and Thr-315.

It localises to the nucleus. The protein resides in the cytoplasm. It catalyses the reaction L-seryl-[protein] + ATP = O-phospho-L-seryl-[protein] + ADP + H(+). The enzyme catalyses L-threonyl-[protein] + ATP = O-phospho-L-threonyl-[protein] + ADP + H(+). Its activity is regulated as follows. Activated following phosphorylation by p38-alpha/MAPK14 following various stresses. Inhibited by ligand 5B (2'-[2-(1,3-benzodioxol-5-yl)pyrimidin-4-yl]-5',6'-dihydrospiro[piperidine-4,7'-pyrrolo[3,2-c]pyridin]- 4'(1'h)-one) and ligand P4O (2-[2-(2-fluorophenyl)pyridin-4-yl]-1,5,6,7-tetrahydro- 4h-pyrrolo[3,2-c]pyridin-4-one), 2 ATP-competitive inhibitors. In terms of biological role, stress-activated serine/threonine-protein kinase involved in cytokines production, endocytosis, cell migration, chromatin remodeling and transcriptional regulation. Following stress, it is phosphorylated and activated by MAP kinase p38-alpha/MAPK14, leading to phosphorylation of substrates. Phosphorylates serine in the peptide sequence, Hyd-X-R-X(2)-S, where Hyd is a large hydrophobic residue. MAPKAPK2 and MAPKAPK3, share the same function and substrate specificity, but MAPKAPK3 kinase activity and level in protein expression are lower compared to MAPKAPK2. Phosphorylates HSP27/HSPB1, KRT18, KRT20, RCSD1, RPS6KA3, TAB3 and TTP/ZFP36. Mediates phosphorylation of HSP27/HSPB1 in response to stress, leading to dissociate HSP27/HSPB1 from large small heat-shock protein (sHsps) oligomers and impair their chaperone activities and ability to protect against oxidative stress effectively. Involved in inflammatory response by regulating tumor necrosis factor (TNF) and IL6 production post-transcriptionally: acts by phosphorylating AU-rich elements (AREs)-binding proteins, such as TTP/ZFP36, leading to regulate the stability and translation of TNF and IL6 mRNAs. Phosphorylation of TTP/ZFP36, a major post-transcriptional regulator of TNF, promotes its binding to 14-3-3 proteins and reduces its ARE mRNA affinity leading to inhibition of dependent degradation of ARE-containing transcript. Involved in toll-like receptor signaling pathway (TLR) in dendritic cells: required for acute TLR-induced macropinocytosis by phosphorylating and activating RPS6KA3. Also acts as a modulator of Polycomb-mediated repression. The chain is MAP kinase-activated protein kinase 3 (MAPKAPK3) from Bos taurus (Bovine).